Here is a 398-residue protein sequence, read N- to C-terminus: Rhizopuspepsin-4 (398 aa).

The first 21 residues, 1 to 21 (MKFTLISSCVALACMALAVEA), serve as a signal peptide directing secretion. A propeptide spans 22-74 (APSGKKINVPLSKNANYKPNAKRAIEKANAKYARFRSSSSSSSSSSCGSAGTE) (activation peptide). The segment covering 58-78 (SSSSSSSSSSCGSAGTESSGS) has biased composition (low complexity). A disordered region spans residues 58–83 (SSSSSSSSSSCGSAGTESSGSVPVTD). One can recognise a Peptidase A1 domain in the interval 90–394 (YYGEVTVGTP…NPQVPQVQIA (305 aa)). Asp108 is an active-site residue. A disulfide bridge links Cys121 with Cys124. Residue Asp291 is part of the active site. The cysteines at positions 325 and 358 are disulfide-linked.

Belongs to the peptidase A1 family.

The catalysed reaction is Hydrolysis of proteins with broad specificity similar to that of pepsin A, preferring hydrophobic residues at P1 and P1'. Clots milk and activates trypsinogen. Does not cleave 4-Gln-|-His-5, but does cleave 10-His-|-Leu-11 and 12-Val-|-Glu-13 in B chain of insulin.. The sequence is that of Rhizopuspepsin-4 from Rhizopus niveus.